Consider the following 261-residue polypeptide: (R)-S-adenosyl-L-methionine hydrolase (261 aa).

Residues Asp-12, Asp-72, and Asn-187 each contribute to the adenosine site. Asn-187, Ser-231, and Val-239 together coordinate (R)-S-adenosyl-L-methionine. An adenosine-binding site is contributed by Val-239.

Belongs to the SAM hydrolase / SAM-dependent halogenase family.

It carries out the reaction (R)-S-adenosyl-L-methionine + H2O = adenosine + L-methionine + H(+). Activity is inhibited by chloride. In terms of biological role, catalyzes the hydrolysis of S-adenosyl-L-methionine (SAM) into adenosine and L-methionine. Is likely stereoselective, specifically hydrolyzing (R)-S-adenosyl-L-methionine ((R)-SAM), the inactive form of the ubiquitous cofactor SAM, and not the active form of SAM, (S)-S-adenosyl-L-methionine. Probaly plays a role in preventing accumulation of (R)-S-adenosyl-L-methionine in cells; maintenance of (S)-S-denosyl-L-methionine homochirality is important for cellular health given that the (R)-form is largely inactive as a methyl donor and can function as an inhibitor of methyltransferases. Shows very slow iodinase activity in vitro. The chain is (R)-S-adenosyl-L-methionine hydrolase from Salinispora arenicola (strain CNS-205).